A 191-amino-acid polypeptide reads, in one-letter code: MIIGVSGIQGDFREHKWMIEKLGHESYVVRTPEDLEKVDGLIIPGGESTTMIRIMKRIGLFEKLKEKILNGLPVYGTCAGLIVLAKEIENYPQESLGVIDIKVMRNAYGRQVDSFDEMVEIKGFNKPFKAIFIRAPRVDGWGPEVDVLSTLDNHPIMLRQKNVLVTSFHPELTDDTRVHEYFIKMVEEYRK.

An L-glutamine-binding site is contributed by 46–48 (GES). The Nucleophile role is filled by cysteine 78. Residues arginine 105 and 133-134 (IR) each bind L-glutamine. Residues histidine 169 and glutamate 171 each act as charge relay system in the active site.

It belongs to the glutaminase PdxT/SNO family. In the presence of PdxS, forms a dodecamer of heterodimers. Only shows activity in the heterodimer.

The enzyme catalyses aldehydo-D-ribose 5-phosphate + D-glyceraldehyde 3-phosphate + L-glutamine = pyridoxal 5'-phosphate + L-glutamate + phosphate + 3 H2O + H(+). It carries out the reaction L-glutamine + H2O = L-glutamate + NH4(+). It functions in the pathway cofactor biosynthesis; pyridoxal 5'-phosphate biosynthesis. In terms of biological role, catalyzes the hydrolysis of glutamine to glutamate and ammonia as part of the biosynthesis of pyridoxal 5'-phosphate. The resulting ammonia molecule is channeled to the active site of PdxS. This is Pyridoxal 5'-phosphate synthase subunit PdxT from Fervidobacterium nodosum (strain ATCC 35602 / DSM 5306 / Rt17-B1).